A 205-amino-acid chain; its full sequence is Thiamine-phosphate synthase (205 aa).

4-amino-2-methyl-5-(diphosphooxymethyl)pyrimidine is bound by residues glutamine 34–lysine 38 and asparagine 66. Mg(2+)-binding residues include aspartate 67 and aspartate 86. 4-amino-2-methyl-5-(diphosphooxymethyl)pyrimidine is bound at residue serine 105. A 2-[(2R,5Z)-2-carboxy-4-methylthiazol-5(2H)-ylidene]ethyl phosphate-binding site is contributed by threonine 131 to threonine 133. A 4-amino-2-methyl-5-(diphosphooxymethyl)pyrimidine-binding site is contributed by lysine 134. Glycine 163 provides a ligand contact to 2-[(2R,5Z)-2-carboxy-4-methylthiazol-5(2H)-ylidene]ethyl phosphate.

Belongs to the thiamine-phosphate synthase family. Mg(2+) is required as a cofactor.

The enzyme catalyses 2-[(2R,5Z)-2-carboxy-4-methylthiazol-5(2H)-ylidene]ethyl phosphate + 4-amino-2-methyl-5-(diphosphooxymethyl)pyrimidine + 2 H(+) = thiamine phosphate + CO2 + diphosphate. It carries out the reaction 2-(2-carboxy-4-methylthiazol-5-yl)ethyl phosphate + 4-amino-2-methyl-5-(diphosphooxymethyl)pyrimidine + 2 H(+) = thiamine phosphate + CO2 + diphosphate. The catalysed reaction is 4-methyl-5-(2-phosphooxyethyl)-thiazole + 4-amino-2-methyl-5-(diphosphooxymethyl)pyrimidine + H(+) = thiamine phosphate + diphosphate. Its pathway is cofactor biosynthesis; thiamine diphosphate biosynthesis; thiamine phosphate from 4-amino-2-methyl-5-diphosphomethylpyrimidine and 4-methyl-5-(2-phosphoethyl)-thiazole: step 1/1. Functionally, condenses 4-methyl-5-(beta-hydroxyethyl)thiazole monophosphate (THZ-P) and 2-methyl-4-amino-5-hydroxymethyl pyrimidine pyrophosphate (HMP-PP) to form thiamine monophosphate (TMP). The sequence is that of Thiamine-phosphate synthase from Neisseria meningitidis serogroup A / serotype 4A (strain DSM 15465 / Z2491).